The sequence spans 42 residues: Delta-hexatoxin-Iw1a (42 aa).

4 disulfides stabilise this stretch: Cys1–Cys15, Cys8–Cys20, Cys14–Cys31, and Cys16–Cys42.

Belongs to the neurotoxin 06 (delta-actx) family. Expressed by the venom gland.

It localises to the secreted. Functionally, inhibits tetrodotoxin-sensitive sodium channels by binding to site 3. It slows the inactivation, causes a prolongation of action potential duration resulting in repetitive firing in autonomic and motor nerve fibers. Does not depolarize the resting potential. Does not affect tetrodotoxin-resistant sodium channels. This lethal neurotoxin is active on both insect and mammalian voltage-gated sodium channels (Nav). The sequence is that of Delta-hexatoxin-Iw1a from Illawarra wisharti (Illawarra funnel-web spider).